The following is a 1205-amino-acid chain: Nitric oxide synthase 3 (1205 aa).

Disordered stretches follow at residues 1-20 (MGNL…LGLG) and 26-73 (CGKQ…FPRV). Residues 33-47 (SPAPEPSWAPAPATP) are compositionally biased toward pro residues. Zn(2+) is bound by residues Cys-96 and Cys-101. The segment at 100–489 (RCLGSLVLPR…PDPWKGSAAK (390 aa)) is interaction with NOSIP. Ser-104 lines the (6R)-L-erythro-5,6,7,8-tetrahydrobiopterin pocket. Ser-116 carries the phosphoserine modification. Position 186 (Cys-186) interacts with heme b. Residues Gln-250, Trp-359, Tyr-360, and Glu-364 each contribute to the L-arginine site. Arg-368 serves as a coordination point for (6R)-L-erythro-5,6,7,8-tetrahydrobiopterin. Asn-369 contacts L-arginine. Residues Ala-449, Trp-450, and Phe-463 each contribute to the (6R)-L-erythro-5,6,7,8-tetrahydrobiopterin site. Tyr-478 lines the heme b pocket. A Phosphothreonine modification is found at Thr-498. FMN is bound by residues Ser-529, Glu-530, Thr-531, Arg-533, Ser-575, and Thr-576. Phosphoserine occurs at positions 618, 636, and 641. FMN contacts are provided by Ser-657, Cys-664, Glu-690, and Gln-694. Arg-781 is a binding site for NADP(+). Positions 796–850 (LQYQPGDHISPHPPPRSSHRPGQGGPRVAPFSERPLMPRTPPPGGPPPSWVRDPR) are disordered. His-803 serves as a coordination point for FAD. The span at 833–844 (PRTPPPGGPPPS) shows a compositional bias: pro residues. FAD is bound by residues Arg-939, Tyr-941, Ser-942, Thr-957, and Ala-959. Thr-1018, Arg-1051, Ser-1080, Arg-1081, Lys-1087, Tyr-1089, and Gln-1091 together coordinate NADP(+). Residue Thr-1177 is modified to Phosphothreonine. 2 positions are modified to phosphoserine: Ser-1179 and Ser-1181.

It belongs to the NOS family. In terms of assembly, homodimer. Interacts with NOSIP and NOSTRIN. Interacts with HSP90AB1. Forms a complex with ASL, ASS1 and SLC7A1; the complex regulates cell-autonomous L-arginine synthesis and citrulline recycling while channeling extracellular L-arginine to nitric oxide synthesis pathway. Requires heme b as cofactor. It depends on FAD as a cofactor. The cofactor is FMN. (6R)-L-erythro-5,6,7,8-tetrahydrobiopterin is required as a cofactor.

Its subcellular location is the membrane. The protein resides in the caveola. The protein localises to the cytoplasm. It is found in the cytoskeleton. It localises to the golgi apparatus. Its subcellular location is the cell membrane. The enzyme catalyses 2 L-arginine + 3 NADPH + 4 O2 + H(+) = 2 L-citrulline + 2 nitric oxide + 3 NADP(+) + 4 H2O. With respect to regulation, stimulated by calcium/calmodulin. Inhibited by NOSIP and NOSTRIN. Functionally, produces nitric oxide (NO) which is implicated in vascular smooth muscle relaxation through a cGMP-mediated signal transduction pathway. NO mediates vascular endothelial growth factor (VEGF)-induced angiogenesis in coronary vessels and promotes blood clotting through the activation of platelets. The protein is Nitric oxide synthase 3 (NOS3) of Ovis aries (Sheep).